We begin with the raw amino-acid sequence, 391 residues long: MNLHEFQAKHLFTEAGIAIPRGYVARSSAEARAAAERLGGSAWVVKAQVHAGGRGKAGGVRVIQEGDEIERYADSLLGERLVTHQTDGRGQPIHALLVEEGLEIARELYLGALVDRASQRVVFMVSAAGGMDIEEVAASEPERIHTVRVHPAAGLQPYQCRQLGFALGLDKAQVGDLTRMMQGLYRLFLERDLSLVEINPLIVTGEGRLLALDAKVTVDDNAVEIGRQSQIQDMRDLTQEDETEVRAAEHNLNYITLDGNIGCMVNGAGLAMATMDVIKLHGGAPANFLDVGGGTNAERVAEAFKIILSSPSVEGILVNIFGGIVRCDMIAEGIVAAVQDVGVEVPVVVRLEGTNVEQGKQILADSGLDLIPADDLADAAAKIVDIAGQVA.

Residues 9-246 (KHLFTEAGIA…LTQEDETEVR (238 aa)) form the ATP-grasp domain. ATP contacts are provided by residues Lys-46, 53 to 55 (GRG), Glu-99, Leu-102, and Glu-107. Residues Asn-199 and Asp-213 each contribute to the Mg(2+) site. Residues Asn-266 and 323-325 (GIV) each bind substrate.

The protein belongs to the succinate/malate CoA ligase beta subunit family. As to quaternary structure, heterotetramer of two alpha and two beta subunits. Mg(2+) serves as cofactor.

It catalyses the reaction succinate + ATP + CoA = succinyl-CoA + ADP + phosphate. The catalysed reaction is GTP + succinate + CoA = succinyl-CoA + GDP + phosphate. It functions in the pathway carbohydrate metabolism; tricarboxylic acid cycle; succinate from succinyl-CoA (ligase route): step 1/1. Succinyl-CoA synthetase functions in the citric acid cycle (TCA), coupling the hydrolysis of succinyl-CoA to the synthesis of either ATP or GTP and thus represents the only step of substrate-level phosphorylation in the TCA. The beta subunit provides nucleotide specificity of the enzyme and binds the substrate succinate, while the binding sites for coenzyme A and phosphate are found in the alpha subunit. In Halorhodospira halophila (strain DSM 244 / SL1) (Ectothiorhodospira halophila (strain DSM 244 / SL1)), this protein is Succinate--CoA ligase [ADP-forming] subunit beta.